Reading from the N-terminus, the 307-residue chain is UDP-N-acetylenolpyruvoylglucosamine reductase (307 aa).

Positions 33–198 (KVGGPADIFV…LNATFALQKG (166 aa)) constitute an FAD-binding PCMH-type domain. Arginine 177 is a catalytic residue. The Proton donor role is filled by serine 227. Glutamate 297 is a catalytic residue.

It belongs to the MurB family. Requires FAD as cofactor.

The protein localises to the cytoplasm. It carries out the reaction UDP-N-acetyl-alpha-D-muramate + NADP(+) = UDP-N-acetyl-3-O-(1-carboxyvinyl)-alpha-D-glucosamine + NADPH + H(+). Its pathway is cell wall biogenesis; peptidoglycan biosynthesis. Functionally, cell wall formation. This chain is UDP-N-acetylenolpyruvoylglucosamine reductase, found in Clostridium novyi (strain NT).